The chain runs to 91 residues: Ixochymostatin (91 aa).

The N-terminal stretch at 1-20 (MKTYVLQALLLTLAVAVVRA) is a signal peptide. Disulfide bonds link cysteine 34–cysteine 70, cysteine 43–cysteine 66, cysteine 48–cysteine 62, cysteine 53–cysteine 90, and cysteine 72–cysteine 84. In terms of domain architecture, TIL spans 34-90 (CAEGETWKECVGSSCAELTCEHPEPSLGCTYDCNYGCYCAPDFFRNANKECVKKDKC).

The protein belongs to the serine protease inhibitor-like (TIL domain-containing) family. Salivary gland. Midgut.

The protein resides in the secreted. Its function is as follows. Tight-binding competitive inhibitor of chymotrypsin-like proteases; inhibits host chymase, cathepsin G (CTSG) and chymotrypsin. Inhibits chymase-mediated generation of vasoconstrictor peptides: angiotensin II and endothelin I. Reduces chymase-mediated vascular permeability and vascular endothelial-cadherin degradation. In Ixodes scapularis (Black-legged tick), this protein is Ixochymostatin.